A 140-amino-acid chain; its full sequence is Natriuretic peptides B (140 aa).

The first 26 residues, 1–26 (MEPCAALPRALLLLLFLHLSPLGGRP), serve as a signal peptide directing secretion. The segment at 71-94 (LEPLHRSHSPAEAPEAGGTPRGVL) is disordered. Cys-118 and Cys-134 are disulfide-bonded.

This sequence belongs to the natriuretic peptide family. Post-translationally, the precursor molecule is proteolytically cleaved by the endoproteases FURIN or CORIN at Arg-108 to produce the brain natriuretic peptide 32. CORIN also cleaves the precursor molecule at additional residues including Arg-105, Arg-108 and possibly Lys-111. In terms of processing, undergoes further proteolytic cleavage by various proteases such as DPP4, MME and possibly FAP, to give rise to a variety of shorter peptides. Cleaved at Pro-110 by the prolyl endopeptidase FAP (seprase) activity (in vitro). Degraded by IDE. During IDE degradation, the resulting products initially increase the activation of NPR1 and can also stimulate NPR2 to produce cGMP before the fragments are completely degraded and inactivated by IDE (in vitro). Brain and also in atria, but at much lower levels than ANP.

It localises to the secreted. In terms of biological role, cardiac hormone that plays a key role in mediating cardio-renal homeostasis. May also function as a paracrine antifibrotic factor in the heart. Acts by specifically binding and stimulating NPR1 to produce cGMP, which in turn activates effector proteins that drive various biological responses. Involved in regulating the extracellular fluid volume and maintaining the fluid-electrolyte balance through natriuresis, diuresis, vasorelaxation, and inhibition of renin and aldosterone secretion. Binds the clearance receptor NPR3. Functionally, may affect cardio-renal homeostasis. Able to promote the production of cGMP although its potency is very low compared to brain natriuretic peptide 32. The chain is Natriuretic peptides B (NPPB) from Canis lupus familiaris (Dog).